Here is a 156-residue protein sequence, read N- to C-terminus: Snaclec stejaggregin-B subunit alpha (156 aa).

The N-terminal stretch at 1-23 (MGRFISVSFGLLVVFLSLSGTGA) is a signal peptide. Cystine bridges form between cysteine 25-cysteine 36, cysteine 53-cysteine 150, and cysteine 125-cysteine 142. The C-type lectin domain maps to 32 to 151 (FKQYCYQIIK…CEQKHLFMCK (120 aa)).

This sequence belongs to the snaclec family. In terms of assembly, heteromultimer; disulfide-linked. As to expression, expressed by the venom gland.

The protein resides in the secreted. Its function is as follows. Interferes with one step of hemostasis (modulation of platelet aggregation, or coagulation cascade, for example). The polypeptide is Snaclec stejaggregin-B subunit alpha (Trimeresurus stejnegeri (Chinese green tree viper)).